We begin with the raw amino-acid sequence, 305 residues long: Polyamine aminopropyltransferase 2 (305 aa).

The 236-residue stretch at 7–242 folds into the PABS domain; sequence WRFVAEWTSE…GLWGFVAASD (236 aa). An S-methyl-5'-thioadenosine-binding site is contributed by glutamine 36. Spermidine contacts are provided by histidine 67 and glutamate 91. S-methyl-5'-thioadenosine contacts are provided by residues aspartate 111 and 143–144; that span reads DG. The active-site Proton acceptor is the aspartate 161. S-methyl-5'-thioadenosine is bound at residue proline 170.

It belongs to the spermidine/spermine synthase family. Homodimer or homotetramer.

Its subcellular location is the cytoplasm. The enzyme catalyses S-adenosyl 3-(methylsulfanyl)propylamine + propane-1,3-diamine = norspermidine + S-methyl-5'-thioadenosine + H(+). In terms of biological role, involved in the biosynthesis of polyamines which are thought to support the growth of thermophilic microorganisms under high-temperature conditions. It seems that long-chain and branched-chain of polyamines effectively stabilize DNA and RNA, respectively. Catalyzes the irreversible transfer of a propylamine group from the amino donor S-adenosylmethioninamine (decarboxy-AdoMet) to 1,3-diaminopropane to yield sym-norspermidine (bis(3-aminopropyl)amine). It can also synthesize thermospermine from spermidine with a very low activity. In Hyperthermus butylicus (strain DSM 5456 / JCM 9403 / PLM1-5), this protein is Polyamine aminopropyltransferase 2.